A 705-amino-acid polypeptide reads, in one-letter code: DNA ligase (705 aa).

Residues 42–46 (DADFD), 91–92 (SL), and glutamate 125 contribute to the NAD(+) site. The N6-AMP-lysine intermediate role is filled by lysine 127. Arginine 148, glutamate 183, lysine 299, and lysine 323 together coordinate NAD(+). Zn(2+)-binding residues include cysteine 428, cysteine 431, cysteine 446, and cysteine 452. A BRCT domain is found at 626–705 (TDGSPVAGKT…DGWLALIEGL (80 aa)).

Belongs to the NAD-dependent DNA ligase family. LigA subfamily. The cofactor is Mg(2+). Mn(2+) serves as cofactor.

The enzyme catalyses NAD(+) + (deoxyribonucleotide)n-3'-hydroxyl + 5'-phospho-(deoxyribonucleotide)m = (deoxyribonucleotide)n+m + AMP + beta-nicotinamide D-nucleotide.. In terms of biological role, DNA ligase that catalyzes the formation of phosphodiester linkages between 5'-phosphoryl and 3'-hydroxyl groups in double-stranded DNA using NAD as a coenzyme and as the energy source for the reaction. It is essential for DNA replication and repair of damaged DNA. The polypeptide is DNA ligase (Roseobacter denitrificans (strain ATCC 33942 / OCh 114) (Erythrobacter sp. (strain OCh 114))).